The chain runs to 427 residues: Isoprenylcysteine alpha-carbonyl methylesterase ICME (427 aa).

A disordered region spans residues 26–59; the sequence is EVLPDEDSDRTTLLNGEPLRRRVSGKSPVDEGPR. The next 2 membrane-spanning stretches (helical) occupy residues 102 to 122 and 157 to 177; these read LLALTCYAMLLMPGFLQVAYS and VVVFVTGGAWIIGYKAWGSLL. Substrate-binding positions include 163–165 and 234–236; these read GGA and QSA. Residues serine 235, aspartate 336, and histidine 368 contribute to the active site.

It belongs to the AB hydrolase superfamily. Isoprenylcysteine methylesterase family. As to expression, expressed in roots, rosette and cauline leaves, stems, flowers and siliques.

Its subcellular location is the endoplasmic reticulum membrane. It is found in the golgi apparatus membrane. The catalysed reaction is [protein]-C-terminal S-[(2E,6E)-farnesyl]-L-cysteine methyl ester + H2O = [protein]-C-terminal S-[(2E,6E)-farnesyl]-L-cysteine + methanol + H(+). In terms of biological role, catalyzes the demethylation of isoprenylcysteine methylesters. In vitro, is specific for N-acetyl-S-farnesyl-L-cysteine methyl ester (AFCme) and has low activity toward N-acetyl-S-geranyl-L-cysteine methyl ester (AGCme). Acts as a positive regulator of ABA signaling. May be involved in the demethylation and inactivation of isoprenylated negative regulators of abscisic acid (ABA) signaling. Carboxyl methylation is a reversible and potentially regulated step in the post-translational modification of prenylated proteins. This is Isoprenylcysteine alpha-carbonyl methylesterase ICME from Arabidopsis thaliana (Mouse-ear cress).